The chain runs to 348 residues: Pyruvate dehydrogenase E1 component subunit alpha (348 aa).

The tract at residues 1–21 is disordered; that stretch reads MAPRKSASVSSRKTAAKPAKK.

As to quaternary structure, heterodimer of an alpha and a beta chain. Requires thiamine diphosphate as cofactor.

It catalyses the reaction N(6)-[(R)-lipoyl]-L-lysyl-[protein] + pyruvate + H(+) = N(6)-[(R)-S(8)-acetyldihydrolipoyl]-L-lysyl-[protein] + CO2. Its function is as follows. The pyruvate dehydrogenase complex catalyzes the overall conversion of pyruvate to acetyl-CoA and CO(2). It contains multiple copies of three enzymatic components: pyruvate dehydrogenase (E1), dihydrolipoamide acetyltransferase (E2) and lipoamide dehydrogenase (E3). This Rhizobium meliloti (strain 1021) (Ensifer meliloti) protein is Pyruvate dehydrogenase E1 component subunit alpha (pdhA).